Consider the following 40-residue polypeptide: U4-ctenitoxin-Co1c (40 aa).

4 disulfide bridges follow: C3/C20, C10/C26, C19/C40, and C28/C38.

As to expression, expressed by the venom gland.

The protein resides in the secreted. Its function is as follows. Not toxic to mice by intracerebroventricular injection. The polypeptide is U4-ctenitoxin-Co1c (Ctenus ornatus (Brazilian spider)).